A 358-amino-acid chain; its full sequence is Cyclin-D1-binding protein 1 (358 aa).

2 interaction with TCF3 regions span residues 1-183 (MESA…VDLV) and 149-358 (ISYN…EVES). 2 interaction with RPLP0 regions span residues 1–189 (MESA…AHEE) and 238–358 (LIIP…EVES). The tract at residues 1 to 207 (MESAAVSAAP…DPYCGLLNDI (207 aa)) is required for interaction with CCND1.

It belongs to the CCNDBP1 family. In terms of assembly, interacts with CCND1 and GRAP2. May also interact with COPS5, RPLP0, SIRT6, SYF2 and TCF3. In terms of processing, phosphorylated.

Its subcellular location is the cytoplasm. The protein localises to the nucleus. Its function is as follows. May negatively regulate cell cycle progression. May act at least in part via inhibition of the cyclin-D1/CDK4 complex, thereby preventing phosphorylation of RB1 and blocking E2F-dependent transcription. The protein is Cyclin-D1-binding protein 1 (CCNDBP1) of Bos taurus (Bovine).